Reading from the N-terminus, the 205-residue chain is Outer-membrane lipoprotein carrier protein (205 aa).

The N-terminal stretch at 1–19 is a signal peptide; that stretch reads MKKIIICFIFVFSINVSFA.

This sequence belongs to the LolA family. Monomer.

It localises to the periplasm. In terms of biological role, participates in the translocation of lipoproteins from the inner membrane to the outer membrane. Only forms a complex with a lipoprotein if the residue after the N-terminal Cys is not an aspartate (The Asp acts as a targeting signal to indicate that the lipoprotein should stay in the inner membrane). This chain is Outer-membrane lipoprotein carrier protein, found in Francisella tularensis subsp. holarctica (strain LVS).